The primary structure comprises 326 residues: Microtubule-associated protein RP/EB family member 2 (326 aa).

Position 9 is a phosphoserine (Ser9). The region spanning 56 to 158 (TMSRHDIIAW…FIQWFKKFYD (103 aa)) is the Calponin-homology (CH) domain. Tyr166 carries the post-translational modification Phosphotyrosine. Disordered stretches follow at residues 170–239 (EARQ…DKDL) and 297–326 (YASD…QEEY). The segment at 186 to 326 (QIFNLPKKSH…DQQPQQQEEY (141 aa)) is DCTN1-binding. Residues 199–233 (SPTAGAAKSSPAAKPGSTPSRPSSAKRASSSGSAS) are compositionally biased toward low complexity. 2 positions are modified to phosphoserine: Ser218 and Ser235. Residues 235–305 (SDKDLETQVI…LYASDEQEGQ (71 aa)) enclose the EB1 C-terminal domain. The interval 258–301 (EGVEKERDFYFGKLREIELLCQEHGQENDDLVQRLMEVLYASDE) is APC-binding. Positions 300 to 312 (DEQEGQTEEPEVE) are enriched in acidic residues. Over residues 317–326 (DQQPQQQEEY) the composition is skewed to low complexity.

Belongs to the MAPRE family. In terms of assembly, interacts with DCTN1. Interacts with APC (via C-terminal). Interacts with monomeric and polymerized tubulin. Interacts with SLAIN1. Interacts (via the N-terminal region) with BAG1. Interacts with ASB14. Interacts with HAX1; this interaction is essential for epidermal cell migration. Post-translationally, phosphorylated at Ser-235 by CK2 leading to enhanced cell adhesion. Phosphorylated by CDK1 and AURKB during mitosis reduces the binding affinity of MAPRE2 for microtubules. In terms of processing, ubiquitinated in an ASB14-dependent manner; leading to proteasomal degradation.

Its subcellular location is the cytoplasm. The protein localises to the cytoskeleton. Adapter protein that is involved in microtubule polymerization, and spindle function by stabilizing microtubules and anchoring them at centrosomes. Therefore, ensures mitotic progression and genome stability. Acts as a central regulator of microtubule reorganization in apico-basal epithelial differentiation. Plays a role during oocyte meiosis by regulating microtubule dynamics. Participates in neurite growth by interacting with plexin B3/PLXNB3 and microtubule reorganization during apico-basal epithelial differentiation. Also plays an essential role for cell migration and focal adhesion dynamics. Mechanistically, recruits HAX1 to microtubules in order to regulate focal adhesion dynamics. This Rattus norvegicus (Rat) protein is Microtubule-associated protein RP/EB family member 2 (Mapre2).